The following is a 309-amino-acid chain: tRNA dimethylallyltransferase (309 aa).

An ATP-binding site is contributed by 13–20; sequence GPTAVGKS. Position 15-20 (15-20) interacts with substrate; the sequence is TAVGKS.

Belongs to the IPP transferase family. In terms of assembly, monomer. Mg(2+) is required as a cofactor.

The enzyme catalyses adenosine(37) in tRNA + dimethylallyl diphosphate = N(6)-dimethylallyladenosine(37) in tRNA + diphosphate. Its function is as follows. Catalyzes the transfer of a dimethylallyl group onto the adenine at position 37 in tRNAs that read codons beginning with uridine, leading to the formation of N6-(dimethylallyl)adenosine (i(6)A). The chain is tRNA dimethylallyltransferase from Lacticaseibacillus paracasei (strain ATCC 334 / BCRC 17002 / CCUG 31169 / CIP 107868 / KCTC 3260 / NRRL B-441) (Lactobacillus paracasei).